A 272-amino-acid polypeptide reads, in one-letter code: Probable ribonuclease HI_0526 (272 aa).

A signal peptide spans M1 to T23. Residues H148, E195, and H199 contribute to the active site.

Belongs to the RNase T2 family.

This is Probable ribonuclease HI_0526 from Haemophilus influenzae (strain ATCC 51907 / DSM 11121 / KW20 / Rd).